A 235-amino-acid chain; its full sequence is Ubiquinone/menaquinone biosynthesis C-methyltransferase UbiE (235 aa).

The S-adenosyl-L-methionine site is built by threonine 60 and aspartate 81.

Belongs to the class I-like SAM-binding methyltransferase superfamily. MenG/UbiE family.

The catalysed reaction is a 2-demethylmenaquinol + S-adenosyl-L-methionine = a menaquinol + S-adenosyl-L-homocysteine + H(+). It carries out the reaction a 2-methoxy-6-(all-trans-polyprenyl)benzene-1,4-diol + S-adenosyl-L-methionine = a 5-methoxy-2-methyl-3-(all-trans-polyprenyl)benzene-1,4-diol + S-adenosyl-L-homocysteine + H(+). Its pathway is quinol/quinone metabolism; menaquinone biosynthesis; menaquinol from 1,4-dihydroxy-2-naphthoate: step 2/2. The protein operates within cofactor biosynthesis; ubiquinone biosynthesis. Methyltransferase required for the conversion of demethylmenaquinol (DMKH2) to menaquinol (MKH2) and the conversion of 2-polyprenyl-6-methoxy-1,4-benzoquinol (DDMQH2) to 2-polyprenyl-3-methyl-6-methoxy-1,4-benzoquinol (DMQH2). The polypeptide is Ubiquinone/menaquinone biosynthesis C-methyltransferase UbiE (Geotalea daltonii (strain DSM 22248 / JCM 15807 / FRC-32) (Geobacter daltonii)).